The sequence spans 209 residues: MGAILGKKIGMTRLYNNKREAVPCTVIQAGPCFVAQVKSTEKDGYDAYQLGFGERDEKKVTKPLAGHYKKAGKTPGYLLSEVSKSLIAGELEAGATVAVDVFTEGEIVDVLGVTKGKGFAGVVKRHNFGGGSRTHGQSDRLRAPGSVGGSSDPSRTFKGTRMAGRMGGENKTVRNLEIVKVMPESNLIVVKGAVPGPKNSYVKIVSTTK.

Positions 128 to 166 are disordered; that stretch reads FGGGSRTHGQSDRLRAPGSVGGSSDPSRTFKGTRMAGRM.

This sequence belongs to the universal ribosomal protein uL3 family. Part of the 50S ribosomal subunit. Forms a cluster with proteins L14 and L19.

Its function is as follows. One of the primary rRNA binding proteins, it binds directly near the 3'-end of the 23S rRNA, where it nucleates assembly of the 50S subunit. This Chlorobaculum parvum (strain DSM 263 / NCIMB 8327) (Chlorobium vibrioforme subsp. thiosulfatophilum) protein is Large ribosomal subunit protein uL3.